Reading from the N-terminus, the 521-residue chain is MGPLGRAWLIAAIFAWALLSARRGLAEEAEASPSPPPSPCPTETESSAGTTGATPPTPNSPDATPEDSTPGATTPVGTPEPPSVSEHDPPVTNSTPPPAPPEDGRPGGAGNASRDGRPSGGGRPRPPRPSKAPPKERKWMLCEREAVAASYAEPLYVHCGVADNATGGARLELWFQRVGRFRSTRGDDEAVRNPFPRAPPVLLFVAQNGSIAYRSAELGDNYIFPSPADPRNLPLTVRSLTAATEGVYTWRRDMGTKSQRKVVTVTTHRAPAVSVEPQPALEGAGYAAVCRAAEYYPPRSTRLHWFRNGYPVEARHARDVFTVDDSGLFSRTSVLTLEDATPTAHPPNLRCDVSWFQSANMERRFYAAGTPAVYRPPELRVYFEGGEAVCEARCVPEGRVSLRWTVRDGIAPSRTEQTGVCAERPGLVNLRGVRLLSTTDGPVDYTCTATGYPAPLPEFSATATYDASPGLIGSPVLVSVVAVACGLGAVGLLLVAASCLRRKARVIQPGLTRARALGSAP.

The N-terminal stretch at 1–21 (MGPLGRAWLIAAIFAWALLSA) is a signal peptide. Residues 22–475 (RRGLAEEAEA…DASPGLIGSP (454 aa)) lie on the Virion surface side of the membrane. A disordered region spans residues 24-138 (GLAEEAEASP…PSKAPPKERK (115 aa)). The segment covering 41–54 (PTETESSAGTTGAT) has biased composition (low complexity). Polar residues predominate over residues 66-76 (EDSTPGATTPV). Residue Asn111 is glycosylated (N-linked (GlcNAc...) asparagine; by host). A disulfide bridge links Cys142 with Cys159. One can recognise an Ig-like V-type domain in the interval 155–227 (LYVHCGVADN…LGDNYIFPSP (73 aa)). N-linked (GlcNAc...) asparagine; by host glycans are attached at residues Asn164 and Asn208. Cystine bridges form between Cys290/Cys351, Cys390/Cys447, and Cys394/Cys421. Positions 386 to 451 (GEAVCEARCV…PVDYTCTATG (66 aa)) constitute an Ig-like C2-type domain. Residues 476 to 496 (VLVSVVAVACGLGAVGLLLVA) form a helical membrane-spanning segment. The Cytoplasmic portion of the chain corresponds to 497-521 (ASCLRRKARVIQPGLTRARALGSAP).

It belongs to the herpesviridae glycoprotein C family. As to quaternary structure, interacts with host complement component C3; this interaction inhibits host immune response by disregulating complement cascade.

The protein resides in the virion membrane. Essential for the initial attachment to heparan sulfate moieties of the host cell surface proteoglycans. Plays also a role in host immune evasion by inhibiting the host complement cascade activation. In Bovine herpesvirus 1.1 (strain Cooper) (BoHV-1), this protein is Envelope glycoprotein C homolog (gC).